The sequence spans 784 residues: LPS-assembly protein LptD (784 aa).

The N-terminal stretch at 1–24 (MKKRIPTLLATMIATALYSQQGLA) is a signal peptide. 2 disulfides stabilise this stretch: cysteine 31/cysteine 724 and cysteine 173/cysteine 725.

The protein belongs to the LptD family. Component of the lipopolysaccharide transport and assembly complex. Interacts with LptE and LptA. Post-translationally, contains two intramolecular disulfide bonds.

It is found in the cell outer membrane. Functionally, together with LptE, is involved in the assembly of lipopolysaccharide (LPS) at the surface of the outer membrane. The chain is LPS-assembly protein LptD from Escherichia coli O1:K1 / APEC.